A 356-amino-acid polypeptide reads, in one-letter code: Dual-specificity RNA methyltransferase RlmN (356 aa).

Glu-92 functions as the Proton acceptor in the catalytic mechanism. Residues 98–334 (EKDRGTLCIS…MRRTRGEDID (237 aa)) form the Radical SAM core domain. An intrachain disulfide couples Cys-105 to Cys-337. [4Fe-4S] cluster-binding residues include Cys-112, Cys-116, and Cys-119. S-adenosyl-L-methionine contacts are provided by residues 162 to 163 (GE), Ser-194, 216 to 218 (SLH), and Asn-294. The active-site S-methylcysteine intermediate is the Cys-337.

The protein belongs to the radical SAM superfamily. RlmN family. Requires [4Fe-4S] cluster as cofactor.

It localises to the cytoplasm. It carries out the reaction adenosine(2503) in 23S rRNA + 2 reduced [2Fe-2S]-[ferredoxin] + 2 S-adenosyl-L-methionine = 2-methyladenosine(2503) in 23S rRNA + 5'-deoxyadenosine + L-methionine + 2 oxidized [2Fe-2S]-[ferredoxin] + S-adenosyl-L-homocysteine. It catalyses the reaction adenosine(37) in tRNA + 2 reduced [2Fe-2S]-[ferredoxin] + 2 S-adenosyl-L-methionine = 2-methyladenosine(37) in tRNA + 5'-deoxyadenosine + L-methionine + 2 oxidized [2Fe-2S]-[ferredoxin] + S-adenosyl-L-homocysteine. In terms of biological role, specifically methylates position 2 of adenine 2503 in 23S rRNA and position 2 of adenine 37 in tRNAs. m2A2503 modification seems to play a crucial role in the proofreading step occurring at the peptidyl transferase center and thus would serve to optimize ribosomal fidelity. The chain is Dual-specificity RNA methyltransferase RlmN from Vesicomyosocius okutanii subsp. Calyptogena okutanii (strain HA).